We begin with the raw amino-acid sequence, 136 residues long: MQYQTESWGSYKMSSLGFGGLGMVADTGLLRIESLASESAVVIFSVSTCCMCHAVKGLFRGMGVSPAVHELDLHPYGGDIQRALIRLLGCSGSSSPGSLPVVFIGGKLVGAMDRVMASHINGSLVPLLKDAGALWL.

The Glutaredoxin domain maps to 29–135 (LLRIESLASE…PLLKDAGALW (107 aa)). A disulfide bridge connects residues Cys-49 and Cys-52. Positions 133–136 (ALWL) match the Responsive for interaction with TGA factors motif.

Belongs to the glutaredoxin family. CC-type subfamily. Interacts with TGA2, TGA3, TGA7 and PAN. Interacts with TGA9 and TGA10 in the nucleus. Highly expressed in inflorescences, roots, and siliques. Expressed at lower levels in mature flowers.

It is found in the cytoplasm. The protein localises to the nucleus. Has a glutathione-disulfide oxidoreductase activity in the presence of NADPH and glutathione reductase. Reduces low molecular weight disulfides and proteins. Involved in flower development as a regulator of petal primorida initiation and further petal morphogenesis. May mediate post-translational modifications of target proteins required for normal petal organ initiation and morphogenesis. ROXY1/TGA protein interactions can occur in vivo and support their biological relevance in petal development. May be involved in the regulation of the floral regulator class C gene AG (AGAMOUS). This Arabidopsis thaliana (Mouse-ear cress) protein is Glutaredoxin-C7 (GRXC7).